We begin with the raw amino-acid sequence, 337 residues long: MPTKSTFSRWKKADLIDLANKLEIDGFPNYAKKSDMIDYLESHLNHLEKPVDFKDDYPELRSFYESMTVDQSKDERNEYGSGSGNGSGSGSCDTATNDSDLEKAYIKEDDDEKPQSGDETSATKPLSSRNANSNAKTNFNLLDFSTDNDSSTSAFTKFKFNFQEYLSDIRYQTQKLNENVQDYLSTISAVDTIFSLLEFSFLVRNILAAGQPTSSSSLASSLEAAVAAHNKYQYTLDFCLPILTWLLFFRGIPTLVSYYINFIRYDLNIELDPMTFNLTKFLISLAIFKTCNNKNIDFHSFRCVNQLWTQLCTVNRSLGMVPLVFSMVSCLLTLYVL.

The Cytoplasmic segment spans residues 1–239 (MPTKSTFSRW…NKYQYTLDFC (239 aa)). A phosphoserine mark is found at Ser-66, Ser-72, Ser-99, and Ser-116. The interval 66–95 (SMTVDQSKDERNEYGSGSGNGSGSGSCDTA) is disordered. A disordered region spans residues 107 to 132 (KEDDDEKPQSGDETSATKPLSSRNAN). Residues 117-132 (GDETSATKPLSSRNAN) show a composition bias toward polar residues. Residues 240-260 (LPILTWLLFFRGIPTLVSYYI) form a helical membrane-spanning segment. Residues 261 to 313 (NFIRYDLNIELDPMTFNLTKFLISLAIFKTCNNKNIDFHSFRCVNQLWTQLCT) lie on the Perinuclear space side of the membrane. Residues 314-336 (VNRSLGMVPLVFSMVSCLLTLYV) traverse the membrane as a helical segment. Leu-337 is a topological domain (cytoplasmic).

It is found in the nucleus membrane. This chain is Glutathione transferase 3 (GTT3), found in Saccharomyces cerevisiae (strain ATCC 204508 / S288c) (Baker's yeast).